The following is a 415-amino-acid chain: Zona pellucida-like domain-containing protein 1 (415 aa).

An N-terminal signal peptide occupies residues 1 to 19 (MEQIRLLLLLTIRVLSGSA). Residues 20–372 (QFNGYNCDAN…PPFQLNAITS (353 aa)) lie on the Extracellular side of the membrane. One can recognise a ZP domain in the interval 43 to 320 (YCGVQAITMK…PICSHRERRD (278 aa)). Intrachain disulfides connect Cys-44–Cys-155 and Cys-79–Cys-104. A glycan (N-linked (GlcNAc...) asparagine) is linked at Asn-164. Intrachain disulfides connect Cys-235–Cys-296 and Cys-255–Cys-313. The tract at residues 323-359 (RRTTWSSQSSSGSAVLSAGPIITRSDETPTNNSQLGS) is disordered. A compositionally biased stretch (low complexity) spans 328–339 (SSQSSSGSAVLS). A compositionally biased stretch (polar residues) spans 350-359 (TPTNNSQLGS). A helical transmembrane segment spans residues 373–393 (ALISGMVILGVMSFSLLVCPL). Topologically, residues 394 to 415 (ALLHRKGPTSLVLNGIRNPVFD) are cytoplasmic.

Post-translationally, proteolytically cleaved before the transmembrane segment to yield the secreted form found in the extracellular matrix of the cupula.

The protein resides in the cytoplasmic vesicle membrane. Its subcellular location is the secreted. It is found in the extracellular space. It localises to the extracellular matrix. In terms of biological role, glycoprotein which is a component of the gelatinous extracellular matrix in the cupulae of the vestibular organ. In Macaca fascicularis (Crab-eating macaque), this protein is Zona pellucida-like domain-containing protein 1 (ZPLD1).